A 600-amino-acid chain; its full sequence is Oligopeptide-binding protein OppA (600 aa).

The N-terminal stretch at 1-22 is a signal peptide; sequence MNKLKVTLLASSVVLAATLLSA. Residue Cys23 is the site of N-palmitoyl cysteine attachment. A lipid anchor (S-diacylglycerol cysteine) is attached at Cys23.

Belongs to the bacterial solute-binding protein 5 family. As to quaternary structure, the complex is composed of two ATP-binding proteins (OppD and OppF), two transmembrane proteins (OppB and OppC) and a solute-binding protein (OppA).

It is found in the cell membrane. Functionally, part of the ABC transporter complex OppABCDF involved in the uptake of oligopeptides. This Lactococcus lactis subsp. cremoris (strain SK11) protein is Oligopeptide-binding protein OppA.